Consider the following 155-residue polypeptide: Troponin C, isoform 3 (155 aa).

EF-hand domains follow at residues 11–46 (EQIA…MGQP), 47–82 (FDKK…FIVE), 87–122 (AMQK…LDDQ), and 123–155 (LTEQ…MTGE). The Ca(2+) site is built by Asp60, Asp62, Ser64, Arg66, and Glu71. Ca(2+) is bound by residues Asp136, Asp138, Ser140, Thr142, and Glu147.

It belongs to the troponin C family. Present in both larval and adult muscles.

In Drosophila melanogaster (Fruit fly), this protein is Troponin C, isoform 3 (TpnC73F).